The following is a 374-amino-acid chain: Dual-specificity RNA methyltransferase RlmN (374 aa).

E94 (proton acceptor) is an active-site residue. Residues 100–339 (EEDRATLCVS…VTIRKTRGDD (240 aa)) form the Radical SAM core domain. C107 and C344 form a disulfide bridge. [4Fe-4S] cluster is bound by residues C114, C118, and C121. Residues 168 to 169 (GE), S200, 222 to 224 (SLH), and N301 contribute to the S-adenosyl-L-methionine site. C344 (S-methylcysteine intermediate) is an active-site residue.

Belongs to the radical SAM superfamily. RlmN family. [4Fe-4S] cluster is required as a cofactor.

It localises to the cytoplasm. It catalyses the reaction adenosine(2503) in 23S rRNA + 2 reduced [2Fe-2S]-[ferredoxin] + 2 S-adenosyl-L-methionine = 2-methyladenosine(2503) in 23S rRNA + 5'-deoxyadenosine + L-methionine + 2 oxidized [2Fe-2S]-[ferredoxin] + S-adenosyl-L-homocysteine. It carries out the reaction adenosine(37) in tRNA + 2 reduced [2Fe-2S]-[ferredoxin] + 2 S-adenosyl-L-methionine = 2-methyladenosine(37) in tRNA + 5'-deoxyadenosine + L-methionine + 2 oxidized [2Fe-2S]-[ferredoxin] + S-adenosyl-L-homocysteine. In terms of biological role, specifically methylates position 2 of adenine 2503 in 23S rRNA and position 2 of adenine 37 in tRNAs. m2A2503 modification seems to play a crucial role in the proofreading step occurring at the peptidyl transferase center and thus would serve to optimize ribosomal fidelity. The protein is Dual-specificity RNA methyltransferase RlmN of Vibrio vulnificus (strain YJ016).